The primary structure comprises 225 residues: NAD(P)H-quinone oxidoreductase subunit K, chloroplastic (225 aa).

Residues C43, C44, C108, and C139 each coordinate [4Fe-4S] cluster.

It belongs to the complex I 20 kDa subunit family. As to quaternary structure, NDH is composed of at least 16 different subunits, 5 of which are encoded in the nucleus. Requires [4Fe-4S] cluster as cofactor.

Its subcellular location is the plastid. It localises to the chloroplast thylakoid membrane. The enzyme catalyses a plastoquinone + NADH + (n+1) H(+)(in) = a plastoquinol + NAD(+) + n H(+)(out). It catalyses the reaction a plastoquinone + NADPH + (n+1) H(+)(in) = a plastoquinol + NADP(+) + n H(+)(out). Its function is as follows. NDH shuttles electrons from NAD(P)H:plastoquinone, via FMN and iron-sulfur (Fe-S) centers, to quinones in the photosynthetic chain and possibly in a chloroplast respiratory chain. The immediate electron acceptor for the enzyme in this species is believed to be plastoquinone. Couples the redox reaction to proton translocation, and thus conserves the redox energy in a proton gradient. This Liriodendron tulipifera (Tuliptree) protein is NAD(P)H-quinone oxidoreductase subunit K, chloroplastic.